We begin with the raw amino-acid sequence, 258 residues long: Type III pantothenate kinase (258 aa).

Residue 6-13 (DVGNTQIF) coordinates ATP. Position 107 to 110 (107 to 110 (GADR)) interacts with substrate. Residue aspartate 109 is the Proton acceptor of the active site. Aspartate 130 is a K(+) binding site. Residue threonine 133 participates in ATP binding. Residue threonine 185 coordinates substrate.

This sequence belongs to the type III pantothenate kinase family. Homodimer. NH4(+) serves as cofactor. Requires K(+) as cofactor.

It is found in the cytoplasm. The enzyme catalyses (R)-pantothenate + ATP = (R)-4'-phosphopantothenate + ADP + H(+). It participates in cofactor biosynthesis; coenzyme A biosynthesis; CoA from (R)-pantothenate: step 1/5. Its function is as follows. Catalyzes the phosphorylation of pantothenate (Pan), the first step in CoA biosynthesis. This is Type III pantothenate kinase from Elusimicrobium minutum (strain Pei191).